The chain runs to 260 residues: Thiazole synthase (260 aa).

Lys96 acts as the Schiff-base intermediate with DXP in catalysis. Residues Gly157, 184-185, and 206-207 contribute to the 1-deoxy-D-xylulose 5-phosphate site; these read AG and NT.

Belongs to the ThiG family. In terms of assembly, homotetramer. Forms heterodimers with either ThiH or ThiS.

The protein localises to the cytoplasm. It carries out the reaction [ThiS sulfur-carrier protein]-C-terminal-Gly-aminoethanethioate + 2-iminoacetate + 1-deoxy-D-xylulose 5-phosphate = [ThiS sulfur-carrier protein]-C-terminal Gly-Gly + 2-[(2R,5Z)-2-carboxy-4-methylthiazol-5(2H)-ylidene]ethyl phosphate + 2 H2O + H(+). It functions in the pathway cofactor biosynthesis; thiamine diphosphate biosynthesis. Catalyzes the rearrangement of 1-deoxy-D-xylulose 5-phosphate (DXP) to produce the thiazole phosphate moiety of thiamine. Sulfur is provided by the thiocarboxylate moiety of the carrier protein ThiS. In vitro, sulfur can be provided by H(2)S. This is Thiazole synthase from Rhodopseudomonas palustris (strain ATCC BAA-98 / CGA009).